The sequence spans 256 residues: Major prion protein 2 (256 aa).

An N-terminal signal peptide occupies residues 1–24 (MVKSHIGSWILVLFVAMWSDVALC). An interaction with GRB2, ERI3 and SYN1 region spans residues 25–233 (KKRPKPGGGW…ESEAYYQRGA (209 aa)). The disordered stretch occupies residues 28 to 110 (PKPGGGWNTG…QWNKPSKPKT (83 aa)). A run of 5 repeats spans residues 54–62 (PQEGGDWGQ), 63–70 (PHGGGWGQ), 71–78 (PHVGGWGQ), 79–86 (PHGGGWGQ), and 87–95 (PHGGGGWGQ). The tract at residues 54–95 (PQEGGDWGQPHGGGWGQPHVGGWGQPHGGGWGQPHGGGGWGQ) is 5 X 8 AA tandem repeats of P-H-G-G-G-W-G-Q. Residues 58–99 (GDWGQPHGGGWGQPHVGGWGQPHGGGWGQPHGGGGWGQGGTH) are compositionally biased toward gly residues. Residues histidine 64, glycine 65, glycine 66, histidine 72, glycine 74, histidine 80, glycine 81, glycine 82, histidine 88, glycine 90, and glycine 91 each coordinate Cu(2+). Cysteine 182 and cysteine 217 are oxidised to a cystine. 2 N-linked (GlcNAc...) asparagine glycosylation sites follow: asparagine 184 and asparagine 200. Alanine 233 carries GPI-anchor amidated alanine lipidation. A propeptide spans 234 to 256 (SVILFSSPPVILLISFLIFLIVG) (removed in mature form).

The protein belongs to the prion family. As to quaternary structure, monomer and homodimer. Has a tendency to aggregate into amyloid fibrils containing a cross-beta spine, formed by a steric zipper of superposed beta-strands. Soluble oligomers may represent an intermediate stage on the path to fibril formation. Copper binding may promote oligomerization. Interacts with GRB2, APP, ERI3/PRNPIP and SYN1. Mislocalized cytosolically exposed PrP interacts with MGRN1; this interaction alters MGRN1 subcellular location and causes lysosomal enlargement. Interacts with KIAA1191.

The protein localises to the cell membrane. It is found in the golgi apparatus. Its function is as follows. Its primary physiological function is unclear. Has cytoprotective activity against internal or environmental stresses. May play a role in neuronal development and synaptic plasticity. May be required for neuronal myelin sheath maintenance. May play a role in iron uptake and iron homeostasis. Soluble oligomers are toxic to cultured neuroblastoma cells and induce apoptosis (in vitro). Association with GPC1 (via its heparan sulfate chains) targets PRNP to lipid rafts. Also provides Cu(2+) or Zn(2+) for the ascorbate-mediated GPC1 deaminase degradation of its heparan sulfate side chains. The chain is Major prion protein 2 from Tragelaphus strepsiceros (Greater kudu).